We begin with the raw amino-acid sequence, 345 residues long: Nicotinate-nucleotide--dimethylbenzimidazole phosphoribosyltransferase (345 aa).

E312 acts as the Proton acceptor in catalysis.

Belongs to the CobT family.

It carries out the reaction 5,6-dimethylbenzimidazole + nicotinate beta-D-ribonucleotide = alpha-ribazole 5'-phosphate + nicotinate + H(+). It functions in the pathway nucleoside biosynthesis; alpha-ribazole biosynthesis; alpha-ribazole from 5,6-dimethylbenzimidazole: step 1/2. In terms of biological role, catalyzes the synthesis of alpha-ribazole-5'-phosphate from nicotinate mononucleotide (NAMN) and 5,6-dimethylbenzimidazole (DMB). The chain is Nicotinate-nucleotide--dimethylbenzimidazole phosphoribosyltransferase from Phocaeicola vulgatus (strain ATCC 8482 / DSM 1447 / JCM 5826 / CCUG 4940 / NBRC 14291 / NCTC 11154) (Bacteroides vulgatus).